The primary structure comprises 1561 residues: MASSAPSSSSCTFQAESSFGPAVASCRRAFDFTLYFEEVVFVLVPSCVFILLAATRLLFILRRARRFTTATAATTTSTDTSSSHSCGNAAQNQHTPIGHGLAHHHILQQCTAGLLVTLHVAGLILLCTTVPSRQRTDLSVPASVVAALAFGVVPVLAHFEHKRRRPSSGPRSSSLLVGLFLCVAVLLRAPLVRTHAALYGSGSALVAVEIASLVLQLVLIAVGEVSSWAADATSNFSPEESAGFLGRSFGSWLWGTFVTGYRTTLSLDSLVPIDSSLESRIVATSFDHILPVSPSGKPGKNGQYRLLLALFRSLGLYALAPVIPRLCLAGFTLAQPFLASATINYIGNGPAPDRDGYGLIGATFLIYTGIAVSTGWYWSLSYKNVTKIRGGLVDGVSQKMLRLSQQHGTESKVLTMMINDVYRITSTLAYAHELWVAPIETAIGTWMLCRHVGPPGLVVLGIIGVCLGTSTYVGKHMAIQQGVWLAAVERRIGATKKMLASIKAIKMMGAGPSVAEALERLRRLEFAASRKFRALIVGTLLSSYSTATLAPVLVFGTYIGATTAAADFSASTLFTSLIWISLLASPLIQLLQIIPSFGAALGSLERIDAFFEKQEFTDERDEATAVDSSCSEKGEKKKEHVSLSIHNSSFSYTDDSEDPILKDVNLVINRGQHVVVTGPAGCGKSLLLQAILGEVAPQNSGSRVCVDGKVAFCSQTPWLENLSARQVVSRFSRDKDPSWTDRVVDACELREFLEAQDPDATIGSQGSMLSGGERQRLALARAIQSRPDILLLDDVLSPIDYVTKKRILRQLFGKSGILHETGTTVVQVTQDHAVAQLADIVLRLDETGALRPYQFPPSQADVEDENGDVDNGAENTRPRESSHTTEAQSGPPEPKSKPTEITDRKVYATYFESIGFLNLVLFIGGGIIFAFCLKFPNVWVGWWTADSSDPDEASHNIGYWFGIYAMLNVLPLIAVAGWVAQLMMLIVPLSGSKLHRKLVDTVSKATFSFISRVDTGSLLNRFNQDLMFVDSRLPLDLFNTAAALLTGIAQVILIGVSAVYVLASIPVLAAVLFLLQHFYLRTSKQLRHLDLQSKAELHTRLSESYQGLATIRAARWQRQVHAEFQAGLDRSQAPVYLLWMVQTWLKLVLNLVVAGLALVVMGAAVGLHQHGSSSGASASASGIGIAFLNLTTLGETMTNLLTAWTSLETTLGAIARIVSFSRDTPAERDVLVRPDSLDHGGGGGGDRAEPPESWPESGGIKLEGVWATYDDDDESDENTDDSGGRPATDVAADGEKHEATTITTTSSTMTTTHYALKDISLEVRPGERVAVCGRTGSGKSTLLLALLGLVAVRRGRISIDGRDVAGVPRARLRGAVHVIPQDPFISVASGNGETIREALDPAGKLGDEEVTDVLQDCGVLDKIVGAGGLAASVSDEALSLSAGERQLFVLARLICRAGGRCRHGGGGILLLDEATSSLDVNTDGKTAEVLRKWLPNMTVLSVLHRLEAALKYDRVVVLEGGRVAHVVTPSESTVSSDIFAFFGRSRSFLESRETGGVSWLE.

7 helical membrane passes run 34–54 (LYFE…LLAA), 110–130 (CTAG…CTTV), 139–159 (SVPA…LAHF), 172–192 (SSSL…APLV), 202–222 (GSAL…LIAV), 314–334 (LGLY…FTLA), and 358–378 (GLIG…GWYW). One can recognise an ABC transmembrane type-1 1 domain in the interval 326–599 (LCLAGFTLAQ…LLQIIPSFGA (274 aa)). The N-linked (GlcNAc...) asparagine glycan is linked to Asn-384. The next 4 membrane-spanning stretches (helical) occupy residues 428–448 (LAYA…TWML), 452–472 (VGPP…TSTY), 535–555 (LIVG…VLVF), and 577–597 (LIWI…IPSF). The 227-residue stretch at 645-871 (IHNSSFSYTD…VEDENGDVDN (227 aa)) folds into the ABC transporter 1 domain. Asn-647 carries N-linked (GlcNAc...) asparagine glycosylation. Residue 678–685 (GPAGCGKS) coordinates ATP. N-linked (GlcNAc...) asparagine glycosylation is present at Asn-721. The tract at residues 853 to 899 (YQFPPSQADVEDENGDVDNGAENTRPRESSHTTEAQSGPPEPKSKPT) is disordered. The next 4 helical transmembrane spans lie at 913 to 933 (SIGF…AFCL), 969 to 989 (VLPL…IVPL), 1037 to 1054 (LFNT…VILI), and 1147 to 1167 (LVLN…AVGL). One can recognise an ABC transmembrane type-1 2 domain in the interval 920 to 1209 (VLFIGGGIIF…LLTAWTSLET (290 aa)). An N-linked (GlcNAc...) asparagine glycan is attached at Asn-1189. Basic and acidic residues predominate over residues 1229-1238 (DVLVRPDSLD). The interval 1229 to 1298 (DVLVRPDSLD…DVAADGEKHE (70 aa)) is disordered. Positions 1269–1280 (YDDDDESDENTD) are enriched in acidic residues. An ABC transporter 2 domain is found at 1297–1545 (HEATTITTTS…SDIFAFFGRS (249 aa)). 1333 to 1340 (GRTGSGKS) contributes to the ATP binding site. Asn-1496 carries an N-linked (GlcNAc...) asparagine glycan.

This sequence belongs to the ABC transporter superfamily. ABCC family. Conjugate transporter (TC 3.A.1.208) subfamily.

It localises to the membrane. Functionally, ABC-type transporter; part of the gene cluster that mediates the biosynthesis of the phomopsins, a group of hexapeptide mycotoxins which infects lupins and causes lupinosis disease in livestock. This is ABC-type transporter phomO' from Diaporthe leptostromiformis (Lupinosis disease fungus).